Reading from the N-terminus, the 784-residue chain is Probable leucine-rich repeat receptor-like protein kinase IMK3 (784 aa).

The first 48 residues, 1 to 48, serve as a signal peptide directing secretion; the sequence is MEFITQNQAITSLSMINTDIDQPKASLRSRFLLHLIICLLFFVPPCSS. Residues 49-409 are Extracellular-facing; that stretch reads QAWDGVVITQ…PSHRNLSTKD (361 aa). The N-linked (GlcNAc...) asparagine glycan is linked to Asn82. LRR repeat units lie at residues 126–148, 150–172, 174–197, 198–220, 222–242, 247–268, 271–294, 295–317, 319–342, and 343–365; these read ALRKLSLHDNNLGGSIPMSLGLI, NLRGVQLFNNRLTGSIPASLGVS, FLQTLDLSNNLLSEIIPPNLADSS, KLLRLNLSFNSLSGQIPVSLSRS, SLQFLALDHNNLSGPILDTWG, NLRVLSLDHNSLSGPFPFSLCN, QLQDFSFSHNRIRGTLPSELSKLT, KLRKMDISGNSVSGHIPETLGNI, SLIHLDLSQNKLTGEIPISISDLE, and SLNFFNVSYNNLSGPVPTLLSQK. 3 N-linked (GlcNAc...) asparagine glycosylation sites follow: Asn203, Asn232, and Asn268. The N-linked (GlcNAc...) asparagine glycan is linked to Asn316. N-linked (GlcNAc...) asparagine glycans are attached at residues Asn348, Asn353, Asn367, and Asn404. The chain crosses the membrane as a helical span at residues 410–430; the sequence is IILIASGALLIVMLILVCVLC. The Cytoplasmic portion of the chain corresponds to 431 to 784; sequence CLLRKKANET…VPEASASTSQ (354 aa). The interval 441-467 is disordered; the sequence is KAKGGEAGPGAVAAKTEKGGEAEAGGE. The Protein kinase domain occupies 488–773; that stretch reads CATAEIMGKS…TTATTSEPLI (286 aa). ATP-binding positions include 494–502 and Lys516; that span reads MGKSTYGTV. Positions 760–784 are disordered; that stretch reads RPEETTATTSEPLIDVPEASASTSQ.

This sequence belongs to the protein kinase superfamily. Ser/Thr protein kinase family. In terms of assembly, interacts with AGL24. Post-translationally, autophosphorylated. Expressed in meristems, including roots, vegetative, inflorescence and floral meristems, and in embryos.

The protein localises to the cell membrane. The catalysed reaction is L-seryl-[protein] + ATP = O-phospho-L-seryl-[protein] + ADP + H(+). The enzyme catalyses L-threonyl-[protein] + ATP = O-phospho-L-threonyl-[protein] + ADP + H(+). Functionally, can phosphorylate AGL24. The sequence is that of Probable leucine-rich repeat receptor-like protein kinase IMK3 (IMK3) from Arabidopsis thaliana (Mouse-ear cress).